The chain runs to 413 residues: Chemotactic signal transduction system substrate-binding protein BasB (413 aa).

Residues 1 to 31 (MHSTTRREWLGAIGATAATGLAGCAGVGGAG) form the signal peptide.

It localises to the cell membrane. Mediates chemotaxis towards five attractant amino acids (leucine, isoleucine, valine, methionine and cysteine). May function as a receptor that binds the amino acids and transduces a signal to BasT. Has probably no additional role in transport. This is Chemotactic signal transduction system substrate-binding protein BasB (basB) from Halobacterium salinarum (strain ATCC 29341 / DSM 671 / R1).